The chain runs to 431 residues: Glutamate-1-semialdehyde 2,1-aminomutase 2 (431 aa).

Lysine 268 carries the post-translational modification N6-(pyridoxal phosphate)lysine.

Belongs to the class-III pyridoxal-phosphate-dependent aminotransferase family. HemL subfamily. Homodimer. It depends on pyridoxal 5'-phosphate as a cofactor.

The protein resides in the cytoplasm. The catalysed reaction is (S)-4-amino-5-oxopentanoate = 5-aminolevulinate. It functions in the pathway porphyrin-containing compound metabolism; protoporphyrin-IX biosynthesis; 5-aminolevulinate from L-glutamyl-tRNA(Glu): step 2/2. The sequence is that of Glutamate-1-semialdehyde 2,1-aminomutase 2 from Anoxybacillus flavithermus (strain DSM 21510 / WK1).